The primary structure comprises 58 residues: Mu-diguetoxin-Dc1b (58 aa).

Cystine bridges form between C12/C26, C20/C40, C25/C54, and C42/C52.

Belongs to the neurotoxin 26 (DTX) family. As to expression, expressed by the venom gland.

Its subcellular location is the secreted. In terms of biological role, acts by delaying the inactivation of presynaptic voltage-sensitive sodium channels (Nav). Acts against insects and cause a progressive spastic paralysis. The polypeptide is Mu-diguetoxin-Dc1b (Diguetia canities (Desert bush spider)).